The sequence spans 188 residues: Elongation factor P (188 aa).

This sequence belongs to the elongation factor P family.

Its subcellular location is the cytoplasm. It participates in protein biosynthesis; polypeptide chain elongation. In terms of biological role, involved in peptide bond synthesis. Stimulates efficient translation and peptide-bond synthesis on native or reconstituted 70S ribosomes in vitro. Probably functions indirectly by altering the affinity of the ribosome for aminoacyl-tRNA, thus increasing their reactivity as acceptors for peptidyl transferase. This chain is Elongation factor P, found in Nitrobacter hamburgensis (strain DSM 10229 / NCIMB 13809 / X14).